Reading from the N-terminus, the 177-residue chain is Nucleoside triphosphate/diphosphate phosphatase (177 aa).

The Proton donor role is filled by Arg23. Mg(2+) contacts are provided by Asn87, Asp103, Asp105, Asp107, Asp120, and Glu123.

Belongs to the Ntdp family. Mg(2+) is required as a cofactor.

The enzyme catalyses a ribonucleoside 5'-triphosphate + H2O = a ribonucleoside 5'-diphosphate + phosphate + H(+). The catalysed reaction is a ribonucleoside 5'-diphosphate + H2O = a ribonucleoside 5'-phosphate + phosphate + H(+). In terms of biological role, has nucleoside phosphatase activity towards nucleoside triphosphates and nucleoside diphosphates. The protein is Nucleoside triphosphate/diphosphate phosphatase of Streptococcus pneumoniae (strain ATCC 700669 / Spain 23F-1).